The sequence spans 458 residues: Bifunctional thioredoxin reductase/thioredoxin (458 aa).

A thioredoxin reductase region spans residues 1–321; the sequence is MNTTPSAHET…LAEHAGSKAN (321 aa). FAD is bound by residues 19–22, 41–48, Asn57, and Val90; these read SGPA and EGTSFGGA. A disulfide bridge connects residues Cys142 and Cys145. NADP(+)-binding residues include Ser163, His182, Arg188, Ile245, and Tyr265. Residues Asp285 and 292–295 contribute to the FAD site; that span reads RQAI. Arg292 contributes to the NADP(+) binding site. The tract at residues 322 to 347 is linker; sequence ETTEETGDVDSTDTTDWSTAMTDAKN. The 115-residue stretch at 341 to 455 folds into the Thioredoxin domain; sequence AMTDAKNAGV…LLRDLSDVVP (115 aa). Cys379 and Cys382 are oxidised to a cystine.

In the N-terminal section; belongs to the class-II pyridine nucleotide-disulfide oxidoreductase family. As to quaternary structure, homodimer. FAD is required as a cofactor.

It localises to the cytoplasm. It catalyses the reaction [thioredoxin]-dithiol + NADP(+) = [thioredoxin]-disulfide + NADPH + H(+). The polypeptide is Bifunctional thioredoxin reductase/thioredoxin (trxB/A) (Mycobacterium leprae (strain TN)).